The following is a 193-amino-acid chain: Probable GTP-binding protein EngB (193 aa).

The region spanning 22 to 193 (QLPEFALAGR…EAWGALQKWM (172 aa)) is the EngB-type G domain. GTP contacts are provided by residues 30–37 (GRSNVGKS), 57–61 (GKTQT), 75–78 (DVPG), 142–145 (TKAD), and 174–176 (FSA). Mg(2+) contacts are provided by serine 37 and threonine 59.

This sequence belongs to the TRAFAC class TrmE-Era-EngA-EngB-Septin-like GTPase superfamily. EngB GTPase family. Mg(2+) serves as cofactor.

Its function is as follows. Necessary for normal cell division and for the maintenance of normal septation. This chain is Probable GTP-binding protein EngB, found in Anoxybacillus flavithermus (strain DSM 21510 / WK1).